The following is a 163-amino-acid chain: ATP synthase subunit b (163 aa).

Residues 13–33 traverse the membrane as a helical segment; that stretch reads SFILFVWFCMKYIWPPIIFAI.

The protein belongs to the ATPase B chain family. As to quaternary structure, F-type ATPases have 2 components, F(1) - the catalytic core - and F(0) - the membrane proton channel. F(1) has five subunits: alpha(3), beta(3), gamma(1), delta(1), epsilon(1). F(0) has three main subunits: a(1), b(2) and c(10-14). The alpha and beta chains form an alternating ring which encloses part of the gamma chain. F(1) is attached to F(0) by a central stalk formed by the gamma and epsilon chains, while a peripheral stalk is formed by the delta and b chains.

The protein resides in the cell membrane. F(1)F(0) ATP synthase produces ATP from ADP in the presence of a proton or sodium gradient. F-type ATPases consist of two structural domains, F(1) containing the extramembraneous catalytic core and F(0) containing the membrane proton channel, linked together by a central stalk and a peripheral stalk. During catalysis, ATP synthesis in the catalytic domain of F(1) is coupled via a rotary mechanism of the central stalk subunits to proton translocation. In terms of biological role, component of the F(0) channel, it forms part of the peripheral stalk, linking F(1) to F(0). This chain is ATP synthase subunit b, found in Buchnera aphidicola subsp. Schizaphis graminum (strain Sg).